A 325-amino-acid polypeptide reads, in one-letter code: Ribosomal RNA small subunit methyltransferase H (325 aa).

S-adenosyl-L-methionine contacts are provided by residues 41 to 43 (GGH), Asp60, Tyr87, Asp108, and Gln115. The interval 295–325 (DDDEKAANPRAAPVRLRAAERTRASEDRRGS) is disordered. The span at 311 to 325 (RAAERTRASEDRRGS) shows a compositional bias: basic and acidic residues.

This sequence belongs to the methyltransferase superfamily. RsmH family.

The protein localises to the cytoplasm. It catalyses the reaction cytidine(1402) in 16S rRNA + S-adenosyl-L-methionine = N(4)-methylcytidine(1402) in 16S rRNA + S-adenosyl-L-homocysteine + H(+). In terms of biological role, specifically methylates the N4 position of cytidine in position 1402 (C1402) of 16S rRNA. This chain is Ribosomal RNA small subunit methyltransferase H, found in Leifsonia xyli subsp. xyli (strain CTCB07).